Here is a 490-residue protein sequence, read N- to C-terminus: ATP synthase subunit beta, chloroplastic (490 aa).

170–177 (GGAGVGKT) contacts ATP.

Belongs to the ATPase alpha/beta chains family. As to quaternary structure, F-type ATPases have 2 components, CF(1) - the catalytic core - and CF(0) - the membrane proton channel. CF(1) has five subunits: alpha(3), beta(3), gamma(1), delta(1), epsilon(1). CF(0) has four main subunits: a(1), b(1), b'(1) and c(9-12).

It is found in the plastid. The protein localises to the chloroplast thylakoid membrane. It carries out the reaction ATP + H2O + 4 H(+)(in) = ADP + phosphate + 5 H(+)(out). Its function is as follows. Produces ATP from ADP in the presence of a proton gradient across the membrane. The catalytic sites are hosted primarily by the beta subunits. The sequence is that of ATP synthase subunit beta, chloroplastic from Cressa truxillensis (Spreading alkaliweed).